The primary structure comprises 769 residues: Cap-specific mRNA (nucleoside-2'-O-)-methyltransferase 2 (769 aa).

Residues 109–322 form the Adrift-type SAM-dependent 2'-O-MTase domain; sequence ELCTQAWCKF…VYVVCLYYKG (214 aa). Lys117 is an active-site residue. S-adenosyl-L-methionine-binding residues include Gly148, Trp167, and Asp235. Asp235 is a catalytic residue. The active-site Proton acceptor is Lys275.

It localises to the nucleus. The protein resides in the cytoplasm. It carries out the reaction a 5'-end (N(7)-methyl 5'-triphosphoguanosine)-(2'-O-methyl-ribonucleoside)-(ribonucleotide) in mRNA + S-adenosyl-L-methionine = a 5'-end (N(7)-methyl 5'-triphosphoguanosine)-(2'-O-methyl-ribonucleoside)-(2'-O-methyl-ribonucleotide) in mRNA + S-adenosyl-L-homocysteine + H(+). S-adenosyl-L-methionine-dependent methyltransferase that mediates mRNA cap2 2'-O-ribose methylation to the 5'-cap structure of mRNAs. Methylates the ribose of the second nucleotide of a m(7)GpppG-capped mRNA and small nuclear RNA (snRNA) (cap0) to produce m(7)GpppRmpNm (cap2). Recognizes a guanosine cap on RNA independently of its N(7) methylation status. Display cap2 methylation on both cap0 and cap1. Displays a preference for cap1 RNAs. This chain is Cap-specific mRNA (nucleoside-2'-O-)-methyltransferase 2 (CMTR2), found in Pongo abelii (Sumatran orangutan).